The following is a 292-amino-acid chain: Formamidopyrimidine-DNA glycosylase (292 aa).

P2 functions as the Schiff-base intermediate with DNA in the catalytic mechanism. Catalysis depends on E3, which acts as the Proton donor. The active-site Proton donor; for beta-elimination activity is K61. H96, R115, and K161 together coordinate DNA. An FPG-type zinc finger spans residues 247–281 (SAYGQEDRPCPRCGTAIRREKFMNRSSFSCPKCQP). Residue R271 is the Proton donor; for delta-elimination activity of the active site.

The protein belongs to the FPG family. In terms of assembly, monomer. Zn(2+) is required as a cofactor.

It catalyses the reaction Hydrolysis of DNA containing ring-opened 7-methylguanine residues, releasing 2,6-diamino-4-hydroxy-5-(N-methyl)formamidopyrimidine.. It carries out the reaction 2'-deoxyribonucleotide-(2'-deoxyribose 5'-phosphate)-2'-deoxyribonucleotide-DNA = a 3'-end 2'-deoxyribonucleotide-(2,3-dehydro-2,3-deoxyribose 5'-phosphate)-DNA + a 5'-end 5'-phospho-2'-deoxyribonucleoside-DNA + H(+). Functionally, involved in base excision repair of DNA damaged by oxidation or by mutagenic agents. Acts as a DNA glycosylase that recognizes and removes damaged bases. Has a preference for oxidized purines, such as 7,8-dihydro-8-oxoguanine (8-oxoG). Has AP (apurinic/apyrimidinic) lyase activity and introduces nicks in the DNA strand. Cleaves the DNA backbone by beta-delta elimination to generate a single-strand break at the site of the removed base with both 3'- and 5'-phosphates. The polypeptide is Formamidopyrimidine-DNA glycosylase (Rhodococcus jostii (strain RHA1)).